The following is a 446-amino-acid chain: Probable carboxylesterase 16 (446 aa).

Residues 84 to 131 (PEPDSLRHKDNYNHQPRSDRRHSYGPNHNSPAPAERNESRRNSYGCNN) are disordered. Residues 87 to 105 (DSLRHKDNYNHQPRSDRRH) are compositionally biased toward basic and acidic residues. The Involved in the stabilization of the negatively charged intermediate by the formation of the oxyanion hole motif lies at 158 to 160 (HGG). Residues Ser-274, Asp-378, and His-408 contribute to the active site.

Belongs to the 'GDXG' lipolytic enzyme family. In terms of tissue distribution, expressed in roots, leaves, stems, flowers and siliques.

The catalysed reaction is a carboxylic ester + H2O = an alcohol + a carboxylate + H(+). Carboxylesterase acting on esters with varying acyl chain length. The chain is Probable carboxylesterase 16 (CXE16) from Arabidopsis thaliana (Mouse-ear cress).